The primary structure comprises 20 residues: Brevinin-1ITb (20 aa).

Methionine 8 carries the methionine sulfoxide; partial modification. A disulfide bridge connects residues cysteine 14 and cysteine 20.

The protein belongs to the frog skin active peptide (FSAP) family. Brevinin subfamily. Expressed by the skin glands.

It localises to the secreted. Antimicrobial peptide. In Rana italica (Italian stream frog), this protein is Brevinin-1ITb.